The chain runs to 361 residues: MKPTLRRKLEALVERHEELERLLSDPKIVSDTDRFRTYSRELAQLAPIATTLAEETRTKADLAAAETLRTDPEMRELAEQEIAIAQAHLTTLDEELQRLLIPQDPRDECNLFLEVRAGTGGDEAAIFAGNLFRMYTRYAERQRWKVEVESDTPGEHGGYKEIIARIVGRGAYSRLKFESGTHRVQRVPATESQGRIHTSAATVAIIPEADEIADISINPADLKIDTFRSSGAGGQHVNKTESAIRITHLPTGVVVESQTERSQHANRDKAMKRLKAQLIESERSQQATAEAMTRKLQVGSGDRSQRIRTYNFPQGRITDHRVENLTLYDLPNIIEGDLDPLIDRLRQEHQAEELARLSNAP.

Q235 is subject to N5-methylglutamine. Positions 284-306 (SQQATAEAMTRKLQVGSGDRSQR) are disordered.

It belongs to the prokaryotic/mitochondrial release factor family. Methylated by PrmC. Methylation increases the termination efficiency of RF1.

The protein resides in the cytoplasm. Peptide chain release factor 1 directs the termination of translation in response to the peptide chain termination codons UAG and UAA. This Xylella fastidiosa (strain 9a5c) protein is Peptide chain release factor 1.